The primary structure comprises 147 residues: Transthyretin (147 aa).

Residues 1–20 (MASLRLFLLCLAGLIFASEA) form the signal peptide. Residue C30 is modified to Sulfocysteine. An L-thyroxine-binding site is contributed by K35. E62 carries the post-translational modification 4-carboxyglutamate. Residue S72 is modified to Phosphoserine. E74 lines the L-thyroxine pocket. Residue N118 is glycosylated (N-linked (GlcNAc...) asparagine). S137 contributes to the L-thyroxine binding site.

Belongs to the transthyretin family. Homotetramer. Dimer of dimers. In the homotetramer, subunits assemble around a central channel that can accommodate two ligand molecules. Interacts with RBP4. Sulfonation of the reactive cysteine Cys-30 enhances the stability of the native conformation of TTR, avoiding misassembly of the protein leading to amyloid formation. As to expression, detected in serum and cerebrospinal fluid (at protein level). Highly expressed in the choroid plexus. Detected at lower levels in the liver.

Its subcellular location is the secreted. Thyroid hormone-binding protein. Probably transports thyroxine from the bloodstream to the brain. This Rattus norvegicus (Rat) protein is Transthyretin (Ttr).